The sequence spans 457 residues: Multidrug resistance protein MdtK (457 aa).

Helical transmembrane passes span 11–31 (LLALAIPVILAQVAQTAMGFV), 53–73 (IWLPAILFGHGLLLALTPVIA), 93–113 (WLAGFVSVLVMIVLWNAGYII), 127–147 (AVGYLRALLWGAPGYLFFQVA), 160–180 (GMVMGFLGLLVNIPVNYIFIY), 188–208 (LGGIGCGVATAAVYWVMFIAM), 243–263 (LPIALALFFEVTLFAVVALLV), 276–296 (IALNFSSLMFVLPMSLAAAVT), 314–334 (AARTGLGVGICMAVVTAIFTV), 350–370 (VVALAAQLMLLAAVYQISDSI), 387–407 (IFFITFTAYWVLGLPSGYILA), and 418–438 (PAGFWMGFIIGLTSAAVLMML).

This sequence belongs to the multi antimicrobial extrusion (MATE) (TC 2.A.66.1) family. MdtK subfamily.

It localises to the cell inner membrane. Functionally, multidrug efflux pump that functions probably as a Na(+)/drug antiporter. This chain is Multidrug resistance protein MdtK, found in Salmonella agona (strain SL483).